A 65-amino-acid polypeptide reads, in one-letter code: Non-structural protein 5a (65 aa).

This Avian infectious bronchitis virus (strain Beaudette) (IBV) protein is Non-structural protein 5a.